We begin with the raw amino-acid sequence, 61 residues long: Adipokinetic prohormone type 2 (61 aa).

The signal sequence occupies residues methionine 1–alanine 22. Glutamine 23 bears the Pyrrolidone carboxylic acid mark. At tryptophan 30 the chain carries Tryptophan amide.

Belongs to the AKH/HRTH/RPCH family. In terms of assembly, adipokinetic hormone precursor-related peptide (APRP) can form three type of disulfide-bond dimers: p1 (alpha-alpha), p2 (alpha-beta), and p3 (beta-beta).

The protein resides in the secreted. This hormone, released from cells in the corpora cardiaca, causes release of diglycerides from the fat body and stimulation of muscles to use these diglycerides as an energy source during energy-demanding processes. The protein is Adipokinetic prohormone type 2 of Locusta migratoria (Migratory locust).